The primary structure comprises 213 residues: Ribosomal RNA small subunit methyltransferase G (213 aa).

Residues Gly81, Leu86, 132-133, and Arg147 each bind S-adenosyl-L-methionine; that span reads VE.

It belongs to the methyltransferase superfamily. RNA methyltransferase RsmG family.

It localises to the cytoplasm. It carries out the reaction guanosine(527) in 16S rRNA + S-adenosyl-L-methionine = N(7)-methylguanosine(527) in 16S rRNA + S-adenosyl-L-homocysteine. Functionally, specifically methylates the N7 position of guanine in position 527 of 16S rRNA. This chain is Ribosomal RNA small subunit methyltransferase G, found in Mannheimia succiniciproducens (strain KCTC 0769BP / MBEL55E).